The primary structure comprises 100 residues: Mini zinc finger protein 2 (100 aa).

Residues 1–26 (MRKRQVVLRRASPEEPSRSSSTASSL) are disordered. The ZF-HD dimerization-type; degenerate zinc finger occupies 33–83 (YGECQKNHAAAVGGYAVDGCREFMASRGEEGTVAALTCAACGCHRSFHRRE).

As to quaternary structure, homo- and heterodimers. Interacts with ZHD1, ZHD3, ZHD5, ZHD8, ZHD10 and ZHD13. Mostly expressed in stems, flowers and siliques, and, to a lower extent, in inflorescence.

It is found in the cytoplasm. In terms of biological role, inhibits zinc finger homeodomain (ZHD) transcription factors by interacting with them to prevent both their nuclear localization and their DNA-binding properties. Involved in integrating signals from multiple hormones by regulating the expression of specific genes. The protein is Mini zinc finger protein 2 (MIF2) of Arabidopsis thaliana (Mouse-ear cress).